We begin with the raw amino-acid sequence, 429 residues long: Cyclin-B2-2 (429 aa).

Residues 66-98 (SQRKQESCDKKKLDSLHPSISRSQEETKKLKPS) form a disordered region. A compositionally biased stretch (basic and acidic residues) spans 68–80 (RKQESCDKKKLDS).

The protein belongs to the cyclin family. Cyclin AB subfamily. Interacts with CDC20-1 and CDC20-2. In terms of tissue distribution, expressed in roots.

The chain is Cyclin-B2-2 (CYCB2-2) from Arabidopsis thaliana (Mouse-ear cress).